A 304-amino-acid chain; its full sequence is Protein pxr1 (304 aa).

Over residues 1-11 (MGLAAPRKKTK) the composition is skewed to basic residues. Disordered stretches follow at residues 1-25 (MGLAAPRKKTKISHDPNNTSWSRST), 144-238 (NATA…DTET), and 256-276 (TSLLASNGPSTSRERQPMGRR). Over residues 15–25 (DPNNTSWSRST) the composition is skewed to polar residues. The region spanning 25–79 (TDGFGHRILKAQGWTPGDFLGARNATHSDLFTTASASHIRVVLKDDTLGLGARPK) is the G-patch domain. Basic and acidic residues-rich tracts occupy residues 154–170 (LRVDFPRETSSNEHENG) and 204–238 (GKEMDMSPRKSREKKQEKIQKKRKIGDCDRLDTET). The segment covering 256-266 (TSLLASNGPST) has biased composition (polar residues).

This sequence belongs to the PINX1 family.

The protein resides in the nucleus. It localises to the nucleolus. Functionally, involved in rRNA-processing at A0, A1 and A2 sites and negatively regulates telomerase. The sequence is that of Protein pxr1 (pxr1) from Aspergillus fumigatus (strain ATCC MYA-4609 / CBS 101355 / FGSC A1100 / Af293) (Neosartorya fumigata).